A 352-amino-acid polypeptide reads, in one-letter code: Serine/threonine-protein phosphatase 2A activator 2 (352 aa).

Belongs to the PTPA-type PPIase family.

The protein resides in the cytoplasm. The enzyme catalyses [protein]-peptidylproline (omega=180) = [protein]-peptidylproline (omega=0). In terms of biological role, PPIases accelerate the folding of proteins. It catalyzes the cis-trans isomerization of proline imidic peptide bonds in oligopeptides. Acts as a regulatory subunit for PP2A-like phosphatases modulating their activity or substrate specificity, probably by inducing a conformational change in the catalytic subunit, a direct target of the PPIase. Can reactivate inactive phosphatase PP2A-phosphatase methylesterase complexes (PP2Ai) in presence of ATP and Mg(2+) by dissociating the inactive form from the complex. In Schizosaccharomyces pombe (strain 972 / ATCC 24843) (Fission yeast), this protein is Serine/threonine-protein phosphatase 2A activator 2 (rrd2).